A 353-amino-acid chain; its full sequence is Deoxyhypusine synthase (353 aa).

Residues 90-94, 116-118, E122, and D228 each bind NAD(+); these read SNLIS and TAG. A spermidine-binding site is contributed by 121 to 122; sequence EE. Spermidine is bound at residue D233. G275 is a binding site for NAD(+). Position 280 (H280) interacts with spermidine. 300–301 provides a ligand contact to NAD(+); it reads TA. Residues 306–308 and 315–321 each bind spermidine; these read GSD and EAVSWGK. Catalysis depends on K321, which acts as the Nucleophile. Position 334-335 (334-335) interacts with NAD(+); sequence EA.

The protein belongs to the deoxyhypusine synthase family. In terms of assembly, homotetramer. NAD(+) serves as cofactor.

It carries out the reaction [eIF5A protein]-L-lysine + spermidine = [eIF5A protein]-deoxyhypusine + propane-1,3-diamine. Its pathway is protein modification; eIF5A hypusination. Its function is as follows. Catalyzes the NAD-dependent oxidative cleavage of spermidine and the subsequent transfer of the butylamine moiety of spermidine to the epsilon-amino group of a specific lysine residue of the eIF-5A precursor protein to form the intermediate deoxyhypusine residue. This is Deoxyhypusine synthase (dys-1) from Neurospora crassa (strain ATCC 24698 / 74-OR23-1A / CBS 708.71 / DSM 1257 / FGSC 987).